The sequence spans 178 residues: Large ribosomal subunit protein uL6 (178 aa).

Belongs to the universal ribosomal protein uL6 family. As to quaternary structure, part of the 50S ribosomal subunit.

This protein binds to the 23S rRNA, and is important in its secondary structure. It is located near the subunit interface in the base of the L7/L12 stalk, and near the tRNA binding site of the peptidyltransferase center. This Limosilactobacillus reuteri (strain DSM 20016) (Lactobacillus reuteri) protein is Large ribosomal subunit protein uL6.